A 152-amino-acid chain; its full sequence is UPF0225 protein YchJ (152 aa).

The protein belongs to the UPF0225 family.

This is UPF0225 protein YchJ from Escherichia coli O81 (strain ED1a).